The chain runs to 833 residues: MWARNLMARALYDNVPECAEELAFRKGDILTVIEQNTGGLEGWWLCSLHGRQGIVPGNRVKLLIGPVQETPGHEQPTPGPMHQTFGQQKLYQVPNSQAASRDTIYQVPPSYQNQGIYQVPTGHGTPEQDVYQVPPSVQRNIGGTNGPLLSKKVITPVRTGHGYVYEYPSRYQKDVYDVPPSHSTQGVYDIPPSSVKGPVFSVPVGEIKPQGVYDIPPTQGVYAIPPSACRDEAGLREKEYDFPPPMKQDGKPDTRPEGVYDIPPTSTKTAGKDLHIKFPCDAPGGVEPMARRHQSFSLHHAPSQLGQSGDTQSDAYDVPRGVQFLEVPTETSEKANPEERDGVYDVPLHNPADAKGSRDVVDGINRLSFSSTGSTRSNMSTSSTSSKESSLSASPSQDKRLRLDPDTAIEKLYRLQQTLEMGVCSLMSLVTTDWRCYGYMERHINEIRTAVDKVELFLREYLHFAKGALANASCLPELVLHNKMKRELQRVEDSHQILSQTSHDLNECSWSLNILAINKPQNKCDDLDRFVMVAKTVPDDAKQLTTTISTYAETLFRADPANSHLKNGPNSIMNSSEYTHPGSQMQPLHPGDYKAQVHSKPLPPSLSKDQPPDCGSSDGSERSWMDDYDYVHLQGKEEFERQQKELLEKENIMKQSKAQLEHHQLSQFQLLEQEITKPVENDISKWKPSQSLPTTNNSVGAQDRQLLCFYYDQCETHFISLLNAIDALFSCVSSAQPPRIFVAHSKFVILSAHKLVFIGDTLTRQVAAQDIRNKVRNSSNQLCEQLKTIVMATKMAALHYPSTTALQEMVHQVTDLSRNAQLFKRSLLEMATF.

The 63-residue stretch at 3 to 65 (ARNLMARALY…PGNRVKLLIG (63 aa)) folds into the SH3 domain. Residues Tyr-91, Tyr-163, Tyr-165, Tyr-176, Tyr-188, Tyr-213, and Tyr-222 each carry the phosphotyrosine modification. The interval 237–258 (EKEYDFPPPMKQDGKPDTRPEG) is disordered. A compositionally biased stretch (basic and acidic residues) spans 248-258 (QDGKPDTRPEG). Position 295 is a phosphoserine (Ser-295). Disordered stretches follow at residues 297 to 316 (SLHH…SDAY), 326 to 403 (EVPT…RLRL), and 560 to 623 (PANS…SERS). Polar residues predominate over residues 304 to 314 (QLGQSGDTQSD). At Tyr-316 the chain carries Phosphotyrosine. Residues 331 to 343 (TSEKANPEERDGV) show a composition bias toward basic and acidic residues. Positions 350 to 833 (NPADAKGSRD…KRSLLEMATF (484 aa)) are interacts with CTTN. Positions 359 to 362 (DVVD) match the Caspase cleavage related site motif. Ser-368 bears the Phosphoserine mark. Low complexity predominate over residues 368 to 396 (SFSSTGSTRSNMSTSSTSSKESSLSASPS). Residues 564–586 (HLKNGPNSIMNSSEYTHPGSQMQ) show a composition bias toward polar residues. Positions 709-759 (FYYDQCETHFISLLNAIDALFSCVSSAQPPRIFVAHSKFVILSAHKLVFIG) are divergent helix-loop-helix motif. The interval 709 to 833 (FYYDQCETHF…KRSLLEMATF (125 aa)) is required for interaction with PLK1. A Phosphoserine modification is found at Ser-779. Thr-803 bears the Phosphothreonine mark.

Belongs to the CAS family. In terms of assembly, homodimer. Forms heterodimers with BCAR1/p130cas. Forms complexes with PTK2B/RAFTK, adapter protein CRKL and LYN kinase. Part of a complex composed of NEDD9, AURKA and CTTN; within the complex NEDD9 acts as a scaffold protein and is required for complex formation. Part of a ternary complex composed of SMAD3, ITCH/AIP4 and NEDD9/HEF1; within the complex NEDD9/HEF1 interacts (via N-terminus) with ITCH/AIP4 (via WW domains); the complex mediates ubiquitination and proteasomal degradation of NEDD9/HEF1. Interacts with SMAD3; the interaction promotes NEDD9 ubiquitination and proteasomal degradation. Interacts with ID2. Interacts with CTTN (via N-terminus). Interacts with MICAL. Interacts with TXNL4/DIM1. Interacts with BCAR3 (via Ras-GEF domain). Interacts with SH2D3C isoform 1 and isoform 2. Interacts with ECT2. Interacts with PTPN11/SHP-2 (via SH2 domains); the interaction is enhanced when NEDD9/CAS-L is tyrosine phosphorylated. Interacts (via C-terminus) with PLK1 (via polo box domains). Interacts with NKX2-5. Interacts with SMAD3; the interaction is inhibited by oxidation of NEDD9. Interacts with NEDD9/HEF1; interaction is induced by CXCL12 promotion of ABL-mediated phosphorylation of NEDD9/HEF1. Interacts (via SH3 domain) with PTK2/FAK. Interacts with FYN; in the presence of PTK2. Interacts with INPPL1/SHIP2. Polyubiquitinated by ITCH/AIP4, leading to proteasomal degradation. Post-translationally, PTK2/FAK1 phosphorylates the protein at the YDYVHL motif (conserved among all cas proteins) following integrin stimulation. The SRC family kinases (FYN, SRC, LCK and CRK) are recruited to the phosphorylated sites and can phosphorylate other tyrosine residues. Ligation of either integrin beta-1 or B-cell antigen receptor on tonsillar B-cells and B-cell lines promotes tyrosine phosphorylation and both integrin and BCR-mediated tyrosine phosphorylation requires an intact actin network. Phosphorylation is required to recruit NEDD9 to T-cell receptor microclusters at the periphery of newly formed immunological synapses. In fibroblasts transformation with oncogene v-ABL results in an increase in tyrosine phosphorylation. Transiently phosphorylated following CD3 cross-linking and this phosphorylated form binds to CRKL and C3G. A mutant lacking the SH3 domain is phosphorylated upon CD3 cross-linking but not upon integrin beta-1 cross-linking. Tyrosine phosphorylation occurs upon stimulation of the G-protein coupled C1a calcitonin receptor. Calcitonin-stimulated tyrosine phosphorylation is mediated by calcium- and protein kinase C-dependent mechanisms and requires the integrity of the actin cytoskeleton. Phosphorylation at Ser-368 induces proteasomal degradation. Phosphorylated by LYN. Phosphorylation at Ser-779 by CSNK1D or CSNK1E, or phosphorylation of Thr-803 by CSNK1E enhances the interaction of NEDD9 with PLK1. Expressed in splenic lymphocytes (at protein level). Expressed in T-cells (at protein level). Expressed in the thymus. Expressed throughout the brain however particularly abundant in the cortex and hippocampus.

Its subcellular location is the cytoplasm. The protein resides in the cell cortex. It is found in the nucleus. It localises to the golgi apparatus. The protein localises to the cell projection. Its subcellular location is the lamellipodium. The protein resides in the cell junction. It is found in the focal adhesion. It localises to the cytoskeleton. The protein localises to the spindle pole. Its subcellular location is the cilium. The protein resides in the cilium basal body. It is found in the basolateral cell membrane. Scaffolding protein which plays a central coordinating role for tyrosine-kinase-based signaling related to cell adhesion. As a focal adhesion protein, plays a role in embryonic fibroblast migration. May play an important role in integrin beta-1 or B cell antigen receptor (BCR) mediated signaling in B- and T-cells. Integrin beta-1 stimulation leads to recruitment of various proteins including CRKl and SHPTP2 to the tyrosine phosphorylated form. Promotes adhesion and migration of lymphocytes; as a result required for the correct migration of lymphocytes to the spleen and other secondary lymphoid organs. Plays a role in the organization of T-cell F-actin cortical cytoskeleton and the centralization of T-cell receptor microclusters at the immunological synapse. Negatively regulates cilia outgrowth in polarized cysts. Modulates cilia disassembly via activation of AURKA-mediated phosphorylation of HDAC6 and subsequent deacetylation of alpha-tubulin. Positively regulates RANKL-induced osteoclastogenesis. Required for the maintenance of hippocampal dendritic spines in the dentate gyrus and CA1 regions, thereby involved in spatial learning and memory. The polypeptide is Enhancer of filamentation 1 (Mus musculus (Mouse)).